The sequence spans 74 residues: Protein translocase subunit SecE (74 aa).

Over 1–36 (MKTDFNQKIEQLKEFIEECRRVWLVLKKPTKDEYLA) the chain is Cytoplasmic. A helical membrane pass occupies residues 37-62 (VAKVTALGISLLGIIGYIIHVPATYI). Over 63 to 74 (KGILKPPTTPRV) the chain is Extracellular.

It belongs to the SecE/SEC61-gamma family. Component of the Sec protein translocase complex. Heterotrimer consisting of alpha (SecY), beta (SecG) and gamma (SecE) subunits. The heterotrimers can form oligomers, although 1 heterotrimer is thought to be able to translocate proteins. Interacts with the ribosome. May interact with SecDF, and other proteins may be involved.

It is found in the cell membrane. In terms of biological role, essential subunit of the protein translocation channel SecYEG. Clamps together the 2 halves of SecY. May contact the channel plug during translocation. The sequence is that of Protein translocase subunit SecE from Methanocaldococcus jannaschii (strain ATCC 43067 / DSM 2661 / JAL-1 / JCM 10045 / NBRC 100440) (Methanococcus jannaschii).